A 707-amino-acid polypeptide reads, in one-letter code: Coiled-coil domain-containing protein 177 (707 aa).

Disordered regions lie at residues 1-65 and 183-294; these read MVDP…EGGR and PSAG…SALT. Composition is skewed to low complexity over residues 38–49, 183–215, and 243–258; these read AASSASASASAA, PSAG…PSSA, and ALSS…YSGE. The residue at position 311 (serine 311) is a Phosphoserine. Residues 364–605 are a coiled coil; sequence GQWELQRVHA…LQHATQVAEE (242 aa). 4 disordered regions span residues 372-426, 454-581, 597-637, and 652-707; these read HAKQ…RSEE, KLQQ…EREH, QHAT…RDED, and ERSE…LDRK. Basic and acidic residues-rich tracts occupy residues 377-392, 399-426, 454-484, 491-514, 543-581, 618-637, and 652-664; these read RERE…EQGR, VEER…RSEE, KLQQ…ERAQ, QRQE…RHEA, ENYE…EREH, RLEK…RDED, and ERSE…RRSA. The segment covering 665 to 675 has biased composition (low complexity); it reads LESARSTARAS. The segment covering 677–707 has biased composition (basic and acidic residues); that stretch reads HVREKVREETNTRSFDRMVREAQLHASLDRK.

The sequence is that of Coiled-coil domain-containing protein 177 (CCDC177) from Homo sapiens (Human).